The following is a 216-amino-acid chain: MSDKLVVWMDCEMTGLRLDSDKLIEVSALVTDSDLNILGDGVDIVIHADDAALAAMPPVVAEMHARSGLTDEVRRSTVTVAEAEQQVLDYIRQYVPTPRTVPLAGNSIATDRAFIARDMPALDAHLHYRMIDVSSIKELCRRWYPRIYFGQPEKGLTHRALADIKESIRELEYYRRTAFVAPPGPSTAEIAAVAAQLGGTAQTAESPQVEGTTQAD.

Residues 6 to 171 enclose the Exonuclease domain; sequence VVWMDCEMTG…ADIKESIREL (166 aa). Tyrosine 128 is an active-site residue.

The protein belongs to the oligoribonuclease family.

It localises to the cytoplasm. 3'-to-5' exoribonuclease specific for small oligoribonucleotides. In Nocardia farcinica (strain IFM 10152), this protein is Oligoribonuclease.